The primary structure comprises 334 residues: Procathepsin L (334 aa).

A signal peptide spans 1–17; that stretch reads MTPLLLLAVLCLGTALA. A propeptide spans 18–113 (activation peptide); sequence TPKFDQTFNA…RLFQEPLMLQ (96 aa). Residue Glu-122 coordinates Zn(2+). Cystine bridges form between Cys-135/Cys-178 and Cys-169/Cys-211. The active site involves Cys-138. The Zn(2+) site is built by Glu-163, Asp-184, Glu-199, Glu-205, Asp-227, Asp-250, His-253, Asp-273, and Asp-275. Cys-269 and Cys-322 are joined by a disulfide. Residue His-276 is part of the active site. Positions 289–290 are excised as a propeptide; the sequence is DS. Asn-300 is an active-site residue.

This sequence belongs to the peptidase C1 family. Dimer of a heavy and a light chain linked by disulfide bonds. Interacts with Long isoform of CD74/Ii chain; the interaction stabilizes the conformation of mature CTSL. In terms of processing, during export along the endocytic pathway, pro-CTSL undergoes several proteolytic cleavages to generate the CTSL single-chain and two-chain mature forms, composed of a heavy chain linked to a light chain by disulfide bonds. Autocleavage; produces the single-chain CTSL after cleavage of the propeptide. The cleavage can be intermolecular. In terms of tissue distribution, both mature cathepsin L1 and procathepsin L are found in the upper epidermis. The lower epidermis predominantly contains procathepsin L. In seminiferous tubules expression is greater at stages VI-VII than at stages IX-XII.

It localises to the lysosome. The protein localises to the apical cell membrane. Its subcellular location is the cytoplasmic vesicle. The protein resides in the secretory vesicle. It is found in the chromaffin granule. It localises to the secreted. The protein localises to the extracellular space. It catalyses the reaction Specificity close to that of papain. As compared to cathepsin B, cathepsin L exhibits higher activity toward protein substrates, but has little activity on Z-Arg-Arg-NHMec, and no peptidyl-dipeptidase activity.. Its activity is regulated as follows. Inhibited by the propeptide produced by autocleavage. Long isoform of CD74/Ii chain stabilizes the conformation of mature CTSL by binding to its active site and serving as a chaperone to help maintain a pool of mature enzyme in endocytic compartments and extracellular space of APCs. IFNG enhances the conversion into the CTSL mature and active form. Inhibited by CST6. Inhibited by the glycopeptide antibiotic teicoplanin. Inhibited by amantadine. In terms of biological role, thiol protease important for the overall degradation of proteins in lysosomes. Plays a critical for normal cellular functions such as general protein turnover, antigen processing and bone remodeling. Involved in the solubilization of cross-linked TG/thyroglobulin and in the subsequent release of thyroid hormone thyroxine (T4) by limited proteolysis of TG/thyroglobulin in the thyroid follicle lumen. In neuroendocrine chromaffin cells secretory vesicles, catalyzes the prohormone proenkephalin processing to the active enkephalin peptide neurotransmitter. In thymus, regulates CD4(+) T cell positive selection by generating the major histocompatibility complex class II (MHCII) bound peptide ligands presented by cortical thymic epithelial cells. Also mediates invariant chain processing in cortical thymic epithelial cells. Major elastin-degrading enzyme at neutral pH. Accumulates as a mature and active enzyme in the extracellular space of antigen presenting cells (APCs) to regulate degradation of the extracellular matrix in the course of inflammation. Secreted form generates endostatin from COL18A1. Critical for cardiac morphology and function. Plays an important role in hair follicle morphogenesis and cycling, as well as epidermal differentiation. Required for maximal stimulation of steroidogenesis by TIMP1. The sequence is that of Procathepsin L from Rattus norvegicus (Rat).